Reading from the N-terminus, the 941-residue chain is UvrABC system protein A (941 aa).

37-44 (GLSGSGKS) is an ATP binding site. Residues 260-287 (CFKCKMSFEELEPLSFSFNSPKGACESC) form a C4-type zinc finger. 2 consecutive ABC transporter domains span residues 316–585 (IFGY…NNHS) and 605–937 (KEKH…KFLA). An ATP-binding site is contributed by 637-644 (GVSGSGKS). A C4-type zinc finger spans residues 737-763 (CEKCQGDGDIKIEMHFLPDVLVQCDSC).

Belongs to the ABC transporter superfamily. UvrA family. As to quaternary structure, forms a heterotetramer with UvrB during the search for lesions.

The protein localises to the cytoplasm. The UvrABC repair system catalyzes the recognition and processing of DNA lesions. UvrA is an ATPase and a DNA-binding protein. A damage recognition complex composed of 2 UvrA and 2 UvrB subunits scans DNA for abnormalities. When the presence of a lesion has been verified by UvrB, the UvrA molecules dissociate. The polypeptide is UvrABC system protein A (Helicobacter pylori (strain J99 / ATCC 700824) (Campylobacter pylori J99)).